A 131-amino-acid polypeptide reads, in one-letter code: Cruxhalorhodopsin-1 (131 aa).

A helical transmembrane segment spans residues 1–11; the sequence is PMILLALGLLA. Over 12–14 the chain is Cytoplasmic; it reads DTD. A helical transmembrane segment spans residues 15 to 38; the sequence is IASLFTAITMDIGMCVTGLAAALI. The Extracellular segment spans residues 39–41; that stretch reads TSS. The chain crosses the membrane as a helical span at residues 42–64; it reads HLLRWVFYGISCAFFVAVLYVLL. Residues 65 to 76 lie on the Cytoplasmic side of the membrane; that stretch reads VQWPADAEAAGT. The helical transmembrane segment at 77–100 threads the bilayer; sequence SEIFGTLKILTVVLWLGYPILWAL. Topologically, residues 101 to 109 are extracellular; sequence GSEGVALLS. The chain crosses the membrane as a helical span at residues 110 to 131; the sequence is VGVTSWGYSGLDILAKYVFAFI. At lysine 125 the chain carries N6-(retinylidene)lysine.

The protein belongs to the archaeal/bacterial/fungal opsin family.

It localises to the cell membrane. Functionally, light-driven chloride pump. The polypeptide is Cruxhalorhodopsin-1 (choP1) (Haloarcula argentinensis).